The primary structure comprises 350 residues: Protein O-mannose kinase (350 aa).

Met1 carries the N-acetylmethionine modification. Residues Met1–Ala20 lie on the Cytoplasmic side of the membrane. The helical; Signal-anchor for type II membrane protein transmembrane segment at Val21–Ile43 threads the bilayer. The Lumenal segment spans residues Ala44–Leu350. The 270-residue stretch at Val81–Leu350 folds into the Protein kinase domain. 3 N-linked (GlcNAc...) asparagine glycosylation sites follow: Asn165, Asn220, and Asn235.

This sequence belongs to the protein kinase superfamily. Ser/Thr protein kinase family. STKL subfamily. As to expression, highest expression is observed in brain, skeletal muscle, kidney and heart in fetal and adult tissues.

It is found in the endoplasmic reticulum membrane. It carries out the reaction 3-O-[beta-D-GalNAc-(1-&gt;3)-beta-D-GlcNAc-(1-&gt;4)-alpha-D-Man]-L-Thr-[protein] + ATP = 3-O-[beta-D-GalNAc-(1-&gt;3)-beta-D-GlcNAc-(1-&gt;4)-(O-6-P-alpha-D-Man)]-Thr-[protein] + ADP + H(+). In terms of biological role, protein O-mannose kinase that specifically mediates phosphorylation at the 6-position of an O-mannose of the trisaccharide (N-acetylgalactosamine (GalNAc)-beta-1,3-N-acetylglucosamine (GlcNAc)-beta-1,4-mannose) to generate phosphorylated O-mannosyl trisaccharide (N-acetylgalactosamine-beta-1,3-N-acetylglucosamine-beta-1,4-(phosphate-6-)mannose). Phosphorylated O-mannosyl trisaccharide is a carbohydrate structure present in alpha-dystroglycan (DAG1), which is required for binding laminin G-like domain-containing extracellular proteins with high affinity. Only shows kinase activity when the GalNAc-beta-3-GlcNAc-beta-terminus is linked to the 4-position of O-mannose, suggesting that this disaccharide serves as the substrate recognition motif. The protein is Protein O-mannose kinase (POMK) of Homo sapiens (Human).